Here is a 682-residue protein sequence, read N- to C-terminus: Serine/threonine-protein kinase PAK 6 (682 aa).

Disordered stretches follow at residues 1-30 (MFRK…DPKE), 132-170 (SPQS…QALP), 200-256 (LQSS…QESS), and 270-367 (PATG…NLYL). Residues 12-25 (ISAPQNFQHRVHTS) form the CRIB domain. The segment at 26 to 407 (FDPKEGKFVG…VVDQGDPRLL (382 aa)) is linker. 2 stretches are compositionally biased toward polar residues: residues 270-279 (PATGAASSSK) and 297-334 (KDSS…QKSL). The Protein kinase domain occupies 408-659 (LDSYVKIGEG…AQELLDHPFL (252 aa)). ATP is bound by residues 414 to 422 (IGEGSTGIV) and lysine 437. Residue aspartate 527 is the Proton acceptor of the active site. A Phosphoserine; by autocatalysis modification is found at serine 561.

Belongs to the protein kinase superfamily. STE Ser/Thr protein kinase family. STE20 subfamily. In terms of assembly, interacts tightly with GTP-bound but not GDP-bound CDC42/p21 and RAC1. Interacts with the androgen receptor AR. Interacts with IQGAP1 and PPM1B. In terms of processing, autophosphorylated. Phosphorylated by MAP2K6/MAPKK6, leading to PAK6 activation.

Its subcellular location is the cytoplasm. The protein resides in the nucleus. The enzyme catalyses L-seryl-[protein] + ATP = O-phospho-L-seryl-[protein] + ADP + H(+). The catalysed reaction is L-threonyl-[protein] + ATP = O-phospho-L-threonyl-[protein] + ADP + H(+). Functionally, serine/threonine protein kinase that plays a role in the regulation of gene transcription. The kinase activity is induced by various effectors including AR or MAP2K6/MAPKK6. Phosphorylates the DNA-binding domain of androgen receptor/AR and thereby inhibits AR-mediated transcription. Also inhibits ESR1-mediated transcription. May play a role in cytoskeleton regulation by interacting with IQGAP1. May protect cells from apoptosis through phosphorylation of BAD. This Mus musculus (Mouse) protein is Serine/threonine-protein kinase PAK 6 (Pak6).